The following is a 427-amino-acid chain: Enolase (427 aa).

Glutamine 163 contacts (2R)-2-phosphoglycerate. Glutamate 205 acts as the Proton donor in catalysis. Positions 242, 285, and 312 each coordinate Mg(2+). Positions 337, 366, 367, and 388 each coordinate (2R)-2-phosphoglycerate. The active-site Proton acceptor is the lysine 337.

This sequence belongs to the enolase family. The cofactor is Mg(2+).

It localises to the cytoplasm. It is found in the secreted. Its subcellular location is the cell surface. The enzyme catalyses (2R)-2-phosphoglycerate = phosphoenolpyruvate + H2O. It functions in the pathway carbohydrate degradation; glycolysis; pyruvate from D-glyceraldehyde 3-phosphate: step 4/5. Catalyzes the reversible conversion of 2-phosphoglycerate (2-PG) into phosphoenolpyruvate (PEP). It is essential for the degradation of carbohydrates via glycolysis. This is Enolase from Burkholderia thailandensis (strain ATCC 700388 / DSM 13276 / CCUG 48851 / CIP 106301 / E264).